The chain runs to 523 residues: Cytochrome P450 52-N1 (523 aa).

A helical transmembrane segment spans residues 5-25; that stretch reads AVLGAFAAFLLYMDVLYPFVI. Heme is bound at residue Cys-469.

The protein belongs to the cytochrome P450 family. Heme is required as a cofactor.

It localises to the membrane. The enzyme catalyses an omega-methyl-long-chain fatty acid + reduced [NADPH--hemoprotein reductase] + O2 = an omega-hydroxy-long-chain fatty acid + oxidized [NADPH--hemoprotein reductase] + H2O + H(+). The catalysed reaction is (9Z,12Z)-octadecadienoate + reduced [NADPH--hemoprotein reductase] + O2 = 18-hydroxy-(9Z,12Z)-octadecadienoate + oxidized [NADPH--hemoprotein reductase] + H2O + H(+). It catalyses the reaction (9Z)-octadecenoate + reduced [NADPH--hemoprotein reductase] + O2 = 18-hydroxy-(9Z)-octadecenoate + oxidized [NADPH--hemoprotein reductase] + H2O + H(+). It carries out the reaction hexadecanoate + reduced [NADPH--hemoprotein reductase] + O2 = 16-hydroxyhexadecanoate + oxidized [NADPH--hemoprotein reductase] + H2O + H(+). The enzyme catalyses (9Z)-hexadecenoate + reduced [NADPH--hemoprotein reductase] + O2 = (9Z)-16-hydroxyhexadec-9-enoate + oxidized [NADPH--hemoprotein reductase] + H2O + H(+). The catalysed reaction is octadecanoate + reduced [NADPH--hemoprotein reductase] + O2 = 18-hydroxyoctadecanoate + oxidized [NADPH--hemoprotein reductase] + H2O + H(+). Functionally, catalyzes the terminal (at the omega-position) hydroxylation of a fatty acid. Probably involved in alkane metabolism. Linoleic acid is the preferred substrate, but it acts on various other C-16, C-18 and C-20 saturated and unsaturated fatty acids, namely palmitic, palmitoleic, stearic, oleic, alpha-linoleic, arachidonic and myristic acid. This chain is Cytochrome P450 52-N1, found in Starmerella bombicola (Yeast).